The primary structure comprises 351 residues: Protein RecA (351 aa).

68 to 75 (GPESSGKT) is a binding site for ATP.

The protein belongs to the RecA family.

The protein localises to the cytoplasm. In terms of biological role, can catalyze the hydrolysis of ATP in the presence of single-stranded DNA, the ATP-dependent uptake of single-stranded DNA by duplex DNA, and the ATP-dependent hybridization of homologous single-stranded DNAs. It interacts with LexA causing its activation and leading to its autocatalytic cleavage. The chain is Protein RecA from Chloroflexus aggregans (strain MD-66 / DSM 9485).